The sequence spans 634 residues: Chaperone protein HtpG (634 aa).

The segment at 1–342 is a; substrate-binding; the sequence is MTVETDKQTL…SSDLSLNVSR (342 aa). The tract at residues 343–559 is b; sequence EILQSGPVVD…QGDLGLQMRQ (217 aa). The tract at residues 560-634 is c; it reads LLEASGQAVP…LNKLLLELSV (75 aa).

It belongs to the heat shock protein 90 family. As to quaternary structure, homodimer.

The protein resides in the cytoplasm. Molecular chaperone. Has ATPase activity. The protein is Chaperone protein HtpG of Xanthomonas euvesicatoria pv. vesicatoria (strain 85-10) (Xanthomonas campestris pv. vesicatoria).